Consider the following 131-residue polypeptide: Small ribosomal subunit protein uS8 (131 aa).

It belongs to the universal ribosomal protein uS8 family. As to quaternary structure, part of the 30S ribosomal subunit. Contacts proteins S5 and S12.

One of the primary rRNA binding proteins, it binds directly to 16S rRNA central domain where it helps coordinate assembly of the platform of the 30S subunit. In Dictyoglomus turgidum (strain DSM 6724 / Z-1310), this protein is Small ribosomal subunit protein uS8.